The following is a 408-amino-acid chain: Arylacetamide deacetylase-like 3 (408 aa).

The next 3 membrane-spanning stretches (helical) occupy residues 2-22 (VVLA…GSLL), 46-66 (ILSC…KLGL), and 109-129 (SSIP…IGSL). An Involved in the stabilization of the negatively charged intermediate by the formation of the oxyanion hole motif is present at residues 120–122 (HGG). S194 is a catalytic residue. N-linked (GlcNAc...) asparagine glycosylation occurs at N321. Catalysis depends on residues D348 and H378.

This sequence belongs to the 'GDXG' lipolytic enzyme family.

Its subcellular location is the membrane. The polypeptide is Arylacetamide deacetylase-like 3 (Aadacl3) (Mus musculus (Mouse)).